The chain runs to 349 residues: GMP reductase (349 aa).

108–131 lines the NADP(+) pocket; it reads IDFLKIKKIFLLSSELKYICIDVA. Residues G181 and G183 each contribute to the K(+) site. Catalysis depends on C186, which acts as the Thioimidate intermediate. NADP(+) is bound at residue 216–239; the sequence is IISDGGCTVSGDIAKAFGGGADFV.

The protein belongs to the IMPDH/GMPR family. GuaC type 1 subfamily. In terms of assembly, homotetramer.

It catalyses the reaction IMP + NH4(+) + NADP(+) = GMP + NADPH + 2 H(+). Catalyzes the irreversible NADPH-dependent deamination of GMP to IMP. It functions in the conversion of nucleobase, nucleoside and nucleotide derivatives of G to A nucleotides, and in maintaining the intracellular balance of A and G nucleotides. This Buchnera aphidicola subsp. Acyrthosiphon pisum (strain Tuc7) protein is GMP reductase.